A 75-amino-acid chain; its full sequence is Insecticidal toxin OcyC10 (75 aa).

Residues 1–19 (MNFATKIVILLLVAALILA) form the signal peptide. 2 cysteine pairs are disulfide-bonded: cysteine 50-cysteine 62 and cysteine 56-cysteine 68.

As to expression, expressed by the venom gland.

Its subcellular location is the secreted. Functionally, insecticidal toxin. The sequence is that of Insecticidal toxin OcyC10 from Opisthacanthus cayaporum (South American scorpion).